We begin with the raw amino-acid sequence, 490 residues long: UDP-N-acetylmuramate--L-alanine ligase (490 aa).

ATP is bound at residue 126 to 132 (GTHGKTT).

It belongs to the MurCDEF family.

It localises to the cytoplasm. The enzyme catalyses UDP-N-acetyl-alpha-D-muramate + L-alanine + ATP = UDP-N-acetyl-alpha-D-muramoyl-L-alanine + ADP + phosphate + H(+). Its pathway is cell wall biogenesis; peptidoglycan biosynthesis. Cell wall formation. In Sodalis glossinidius (strain morsitans), this protein is UDP-N-acetylmuramate--L-alanine ligase.